The sequence spans 112 residues: DNA-binding protein TON_1102 (112 aa).

It belongs to the PDCD5 family.

This chain is DNA-binding protein TON_1102, found in Thermococcus onnurineus (strain NA1).